Consider the following 1377-residue polypeptide: MAERADLVFHNKAIDGTAMKRLISRLIDHFGMAYTSHILDQIKTLGFQQATATSISLGIDDLLTIPSKGWLVQDAEQQSLILEKHHHYGNVHAVEKLRQSIEIWYATSEYLRQEMNPNFRMTDPSNPVHIMSFSGARGNASQVHQLVGMRGLMSDPQGQMIDLPIQSNLREGLSLTEYIISCYGARKGVVDTAVRTSDAGYLTRRLVEVVQHIVVRRTDCGTLRGSSVSPRNGTITERIFIQTLIGRVLADDIYIGSRCIAIRNQDIGIGLVNRFITFRAQPISIRTPFTCKSTSWICRLCYGRSPTHGDLVELGEAVGIIAGQSIGEPGTQLTLRTFHTGGVFTGGTAEHVRAPSNGKIKFKEDLVHPTRTRHGHPAFLCYIDLYVTIEGQDIRHNVTIPPKSFLLVQNDQYVESEQVIAEIRAGTSTLNFKERVRKHIYSDSEGEMHWSTAVYHAPEYTYGNVHLLPKTSHLWILSGGPYRSSIVSFSLHKDQDQMNVHSLSAEQKSISNLLVTNNQVRHKFLSSEPSGKKGERILDYSGPNRIICNGHCNFIYPAILHENSYLLAKRRRNRFIIPFQYNQEQEKELITRSGISIEIPINGIFRRNSILAYFDDPRYRRNSSGITKYGTIEAHSIVKKEDLIEYRKRPKYQTKIDRFFFIPEEVHILPGSSSVMVRNNSIIGVNTRITFKTRSRVGGLVRVEKKKKKIELKIFSGDIHFPGETDKISWHSGILIPPGTGKKNSKESKNFKNWIYVQRITPTKKKYFVLVRPVVTYEIADGINLATLFPQDPLQERDNVQLRVVNYILYGNGKPIRGISHTNIQLVRTCLVLNWDQEKNGSSMEEVHASFVEVRVNNLIRDFIRMDLVKSPISYTRKRNAPAGSELILANGSDYTNLNPFYSKARIQQSLTQHQGTIRTLLNRNKECQSLIFLSSSNCFRIGPFKGLKYNNMTKKSNKRDSLLLIRNSLGPLGIVPKIANFSSFYYLITHNQILINKYLLLDNLKQTFQKLKYYLMDENGRIYNPDPCSNMILNPFNWNWYFLHHDYCEETSTIISLGQFFCENVCISKYGPHLKSGQVIIVHVDSLVIRSAKPYLATPGATVHGHYGEILYKGDTLVTFIYEKSRSGDITQGLPKVEQVLEVRSIDSISMNLEKRVEGWNERITRILGIPWGFLIGAELTIAQSRVSLVNKIQKVYRSQGVQIHNRHIEIIVRQITSKVLVSEDGMSNVFSPGELIGLLRAERTGRALEEAICYRAVLLGITRASLNTQSFISEASFQETARVLAKAALRGRIDWLKGLKENVVLGGMIPVGTGFKGLVHRSSQHSNISLEIQNTNLFEGGMRDILFHHRELFYSCIPKNFHDTSEQKFTGFIDS.

Residues Cys220, Cys291, Cys298, and Cys301 each coordinate Zn(2+).

It belongs to the RNA polymerase beta' chain family. RpoC2 subfamily. In terms of assembly, in plastids the minimal PEP RNA polymerase catalytic core is composed of four subunits: alpha, beta, beta', and beta''. When a (nuclear-encoded) sigma factor is associated with the core the holoenzyme is formed, which can initiate transcription. Requires Zn(2+) as cofactor.

Its subcellular location is the plastid. It localises to the chloroplast. It catalyses the reaction RNA(n) + a ribonucleoside 5'-triphosphate = RNA(n+1) + diphosphate. In terms of biological role, DNA-dependent RNA polymerase catalyzes the transcription of DNA into RNA using the four ribonucleoside triphosphates as substrates. The polypeptide is DNA-directed RNA polymerase subunit beta'' (Nandina domestica (Heavenly bamboo)).